The primary structure comprises 637 residues: Rab11 family-interacting protein 4 (637 aa).

An EF-hand domain is found at glycine 49–cysteine 84. Positions 62, 64, 68, and 73 each coordinate Ca(2+). The interval lysine 82–histidine 637 is necessary for interaction with RAB11A, subcellular location, homo- or heterooligomerization. 2 disordered regions span residues glutamate 138–lysine 175 and tyrosine 219–glutamine 256. Positions lysine 280–tyrosine 617 form a coiled coil. The 63-residue stretch at glutamate 574 to lysine 636 folds into the FIP-RBD domain.

As to quaternary structure, homodimer. Forms a complex with Rab11 (RAB11A or RAB11B) and ARF6. Interacts with RAB11A; the interaction is direct. Forms a heterooligomeric complex with RAB11FIP2, RAB11FIP3 and RAB11FIP5. Interacts with ECPAS. In terms of assembly, (Microbial infection) Interacts with human cytomegalovirus/HHV-5 protein gM/UL100. In terms of tissue distribution, present at high level in testis (at protein level). Weakly expressed in other tissues.

The protein localises to the endosome. It localises to the cytoplasm. The protein resides in the cytoskeleton. It is found in the spindle. Its subcellular location is the microtubule organizing center. The protein localises to the centrosome. It localises to the recycling endosome membrane. The protein resides in the cleavage furrow. It is found in the midbody. Its subcellular location is the cytoplasmic vesicle. Acts as a regulator of endocytic traffic by participating in membrane delivery. Required for the abscission step in cytokinesis, possibly by acting as an 'address tag' delivering recycling endosome membranes to the cleavage furrow during late cytokinesis. In case of infection by HCMV (human cytomegalovirus), may participate in egress of the virus out of nucleus; this function is independent of ARF6. The chain is Rab11 family-interacting protein 4 (RAB11FIP4) from Homo sapiens (Human).